We begin with the raw amino-acid sequence, 91 residues long: MKAWHVVLLMCLAVVLGNLPGIIAEASASPLCEYRSAAHIAEHGGKVADDAWHIKHGELPSCDESPKGEARRDNDNRDGGKSRFCRKRWYC.

Residues 58–81 are disordered; the sequence is ELPSCDESPKGEARRDNDNRDGGK.

The chain is Gene 76 protein (76) from Mycobacterium phage L5 (Mycobacteriophage L5).